The sequence spans 211 residues: Large ribosomal subunit protein uL3 (211 aa).

Residue Q150 is modified to N5-methylglutamine.

The protein belongs to the universal ribosomal protein uL3 family. Part of the 50S ribosomal subunit. Forms a cluster with proteins L14 and L19. Methylated by PrmB.

Functionally, one of the primary rRNA binding proteins, it binds directly near the 3'-end of the 23S rRNA, where it nucleates assembly of the 50S subunit. The polypeptide is Large ribosomal subunit protein uL3 (Pseudomonas syringae pv. syringae (strain B728a)).